The sequence spans 278 residues: tRNA (guanine-N(7)-)-methyltransferase (278 aa).

S-adenosyl-L-methionine contacts are provided by residues glycine 95, glutamate 118–isoleucine 119, asparagine 153–alanine 154, and cysteine 173. Aspartate 176 is a catalytic residue. Threonine 251–glutamate 253 provides a ligand contact to S-adenosyl-L-methionine.

This sequence belongs to the class I-like SAM-binding methyltransferase superfamily. TrmB family. In terms of assembly, forms a complex with TRM82.

The protein resides in the nucleus. The catalysed reaction is guanosine(46) in tRNA + S-adenosyl-L-methionine = N(7)-methylguanosine(46) in tRNA + S-adenosyl-L-homocysteine. Its pathway is tRNA modification; N(7)-methylguanine-tRNA biosynthesis. In terms of biological role, catalyzes the formation of N(7)-methylguanine at position 46 (m7G46) in tRNA. In Kluyveromyces lactis (strain ATCC 8585 / CBS 2359 / DSM 70799 / NBRC 1267 / NRRL Y-1140 / WM37) (Yeast), this protein is tRNA (guanine-N(7)-)-methyltransferase.